Here is a 437-residue protein sequence, read N- to C-terminus: UDP-N-acetylmuramate--L-alanine ligase (437 aa).

108-114 (GAHGKTS) provides a ligand contact to ATP.

The protein belongs to the MurCDEF family.

It localises to the cytoplasm. The enzyme catalyses UDP-N-acetyl-alpha-D-muramate + L-alanine + ATP = UDP-N-acetyl-alpha-D-muramoyl-L-alanine + ADP + phosphate + H(+). The protein operates within cell wall biogenesis; peptidoglycan biosynthesis. Its function is as follows. Cell wall formation. This is UDP-N-acetylmuramate--L-alanine ligase from Staphylococcus aureus (strain MRSA252).